Reading from the N-terminus, the 263-residue chain is uncharacterized protein (263 aa).

The signal sequence occupies residues 1–22 (MEYLKRLALLISVIILTIFIMG). Cysteine 23 is lipidated: N-palmitoyl cysteine. The S-diacylglycerol cysteine moiety is linked to residue cysteine 23.

The protein belongs to the staphylococcal tandem lipoprotein family.

The protein localises to the cell membrane. This is an uncharacterized protein from Staphylococcus aureus (strain USA300).